The primary structure comprises 157 residues: Large ribosomal subunit protein bL20 (157 aa).

The interval 121-157 is disordered; it reads TSAPAVSAEAAPKAKAAKKPAAKKAAAKKPVAEEAAK. Over residues 122–134 the composition is skewed to low complexity; that stretch reads SAPAVSAEAAPKA. Residues 135-147 show a composition bias toward basic residues; sequence KAAKKPAAKKAAA.

It belongs to the bacterial ribosomal protein bL20 family.

Binds directly to 23S ribosomal RNA and is necessary for the in vitro assembly process of the 50S ribosomal subunit. It is not involved in the protein synthesizing functions of that subunit. This is Large ribosomal subunit protein bL20 (rplT) from Arthrobacter sp. (strain FB24).